The chain runs to 504 residues: MEEFQGYLELDRFRQHDFLYPLIFREYIXXXAHDHGLNRVILLENLAYDNKSSLLIVKRLITRMYQQNHLMISANDSNQNRFLGYNKNLYSQMISEGFSIIAEIPYSLRLISSLEGAQIIRSYNLRSIHSIFPFLEDKFPHLNYVADVLIPYPIHLEILVQTLRYRVKDASSLHLLRFFLHEYSNGNILFILNKSISIFSKSNSRLLLFLYNSYICEYESLFLFLRNQSSHLRLTSSGVLFERIYLHRKMGDLAEVFVNDFRGILCFLKDPFIHYVRYQGKSILSSKDTPLLMNKWKYYLVSLWQCHFYVWSHPGRIYINQLSKHSLDFLGYFSNVPLNPSMVPSQMLENSFVINNAPKKLDTIVPIIPLIGSLAKAKFCNALGHPISKPTWADLSDFDIINRFVRICKNLSHYYSGSSKKKGMYRIKYILRLSCVKTLARKHKSTIRAFLKRLGSELFEEFFTEEEEFLSLIFPRTSFTLRRLYRGRVWYLDIICMNGLANHE.

The protein belongs to the intron maturase 2 family. MatK subfamily.

It localises to the plastid. It is found in the chloroplast. In terms of biological role, usually encoded in the trnK tRNA gene intron. Probably assists in splicing its own and other chloroplast group II introns. In Carpinus betulus (European hornbeam), this protein is Maturase K.